The chain runs to 32 residues: Photosystem II reaction center protein T (32 aa).

The chain crosses the membrane as a helical span at residues 3–23 (AITYTFILFLTLGLLFFAVAF).

The protein belongs to the PsbT family. In terms of assembly, PSII is composed of 1 copy each of membrane proteins PsbA, PsbB, PsbC, PsbD, PsbE, PsbF, PsbH, PsbI, PsbJ, PsbK, PsbL, PsbM, PsbT, PsbX, PsbY, PsbZ, Psb30/Ycf12, peripheral proteins PsbO, CyanoQ (PsbQ), PsbU, PsbV and a large number of cofactors. It forms dimeric complexes.

It is found in the cellular thylakoid membrane. Its function is as follows. Found at the monomer-monomer interface of the photosystem II (PS II) dimer, plays a role in assembly and dimerization of PSII. PSII is a light-driven water plastoquinone oxidoreductase, using light energy to abstract electrons from H(2)O, generating a proton gradient subsequently used for ATP formation. The sequence is that of Photosystem II reaction center protein T from Synechococcus sp. (strain JA-2-3B'a(2-13)) (Cyanobacteria bacterium Yellowstone B-Prime).